The chain runs to 1176 residues: Condensin complex subunit 1 (1176 aa).

Phosphoserine is present on residues serine 464 and serine 475.

This sequence belongs to the CND1 (condensin subunit 1) family. In terms of assembly, component of the condensin complex, which contains the SMC2 and SMC4 heterodimer, and three non SMC subunits that probably regulate the complex: BRN1, YCS4 and YCG1/YCS5.

The protein localises to the nucleus. It localises to the chromosome. Regulatory subunit of the condensin complex, a complex required for conversion of interphase chromatin into mitotic-like condense chromosomes. The condensin complex probably introduces positive supercoils into relaxed DNA in the presence of type I topoisomerases and converts nicked DNA into positive knotted forms in the presence of type II topoisomerases. The condensin complex probably also plays a role during interphase. In Saccharomyces cerevisiae (strain ATCC 204508 / S288c) (Baker's yeast), this protein is Condensin complex subunit 1 (YCS4).